A 452-amino-acid chain; its full sequence is Ribulose bisphosphate carboxylase large chain (452 aa).

Positions 1–2 (MS) are excised as a propeptide. Pro-3 is modified (N-acetylproline). At Lys-14 the chain carries N6,N6,N6-trimethyllysine. Substrate-binding residues include Asn-123 and Thr-173. The active-site Proton acceptor is Lys-175. Lys-177 contacts substrate. The Mg(2+) site is built by Lys-201, Asp-203, and Glu-204. Position 201 is an N6-carboxylysine (Lys-201). His-294 (proton acceptor) is an active-site residue. 3 residues coordinate substrate: Arg-295, Xaa-327, and Ser-379.

It belongs to the RuBisCO large chain family. Type I subfamily. As to quaternary structure, heterohexadecamer of 8 large chains and 8 small chains; disulfide-linked. The disulfide link is formed within the large subunit homodimers. Mg(2+) is required as a cofactor. The disulfide bond which can form in the large chain dimeric partners within the hexadecamer appears to be associated with oxidative stress and protein turnover.

The protein localises to the plastid. It is found in the chloroplast. It carries out the reaction 2 (2R)-3-phosphoglycerate + 2 H(+) = D-ribulose 1,5-bisphosphate + CO2 + H2O. It catalyses the reaction D-ribulose 1,5-bisphosphate + O2 = 2-phosphoglycolate + (2R)-3-phosphoglycerate + 2 H(+). In terms of biological role, ruBisCO catalyzes two reactions: the carboxylation of D-ribulose 1,5-bisphosphate, the primary event in carbon dioxide fixation, as well as the oxidative fragmentation of the pentose substrate in the photorespiration process. Both reactions occur simultaneously and in competition at the same active site. This is Ribulose bisphosphate carboxylase large chain from Salvadora persica (Toothbrush tree).